The sequence spans 179 residues: Replication restart protein DnaT (179 aa).

The tract at residues Gly156–Gly179 is disordered.

This sequence belongs to the DnaT family. As to quaternary structure, homooligomerizes. Interacts with PriB. Component of the replication restart primosome. Primosome assembly occurs via a 'hand-off' mechanism. PriA binds to replication forks, subsequently PriB then DnaT bind; DnaT then displaces ssDNA to generate the helicase loading substrate.

Functionally, involved in the restart of stalled replication forks, which reloads the replicative helicase on sites other than the origin of replication. Can function in multiple replication restart pathways. Displaces ssDNA from a PriB-ssDNA complex. Probably forms a spiral filament on ssDNA. The chain is Replication restart protein DnaT from Escherichia coli O157:H7.